The primary structure comprises 90 residues: Phosphoribosyl-ATP pyrophosphatase (90 aa).

The protein belongs to the PRA-PH family.

The protein resides in the cytoplasm. It carries out the reaction 1-(5-phospho-beta-D-ribosyl)-ATP + H2O = 1-(5-phospho-beta-D-ribosyl)-5'-AMP + diphosphate + H(+). It functions in the pathway amino-acid biosynthesis; L-histidine biosynthesis; L-histidine from 5-phospho-alpha-D-ribose 1-diphosphate: step 2/9. The sequence is that of Phosphoribosyl-ATP pyrophosphatase from Streptomyces avermitilis (strain ATCC 31267 / DSM 46492 / JCM 5070 / NBRC 14893 / NCIMB 12804 / NRRL 8165 / MA-4680).